The sequence spans 524 residues: Ribonuclease Y (524 aa).

A helical membrane pass occupies residues 3–23 (IVINLFLIIFASVVFFAAGFF). In terms of domain architecture, KH spans 214–274 (ALSVVHIQSD…LRREHAKLTL (61 aa)). One can recognise an HD domain in the interval 340–432 (LLQHSREVAM…VDAANVISLA (93 aa)).

This sequence belongs to the RNase Y family.

It localises to the cell membrane. Its function is as follows. Endoribonuclease that initiates mRNA decay. The sequence is that of Ribonuclease Y from Chlorobium luteolum (strain DSM 273 / BCRC 81028 / 2530) (Pelodictyon luteolum).